Consider the following 301-residue polypeptide: Triplex capsid protein 2 (301 aa).

It belongs to the herpesviridae TRX2 protein family. As to quaternary structure, interacts with TRX1 and major capisd protein/MCP.

It localises to the virion. It is found in the host nucleus. Its function is as follows. Structural component of the T=16 icosahedral capsid. The capsid is composed of pentamers and hexamers of major capsid protein/MCP, which are linked together by heterotrimers called triplexes. These triplexes are formed by a single molecule of triplex protein 1/TRX1 and two copies of triplex protein 2/TRX2. Additionally, TRX1 is required for efficient transport of TRX2 to the nucleus, which is the site of capsid assembly. The sequence is that of Triplex capsid protein 2 from Homo sapiens (Human).